Consider the following 309-residue polypeptide: NAD kinase (309 aa).

The active-site Proton acceptor is aspartate 89. NAD(+) is bound by residues 89–90 (DG), 163–164 (NE), histidine 174, arginine 191, aspartate 193, and 204–209 (TAYALS).

The protein belongs to the NAD kinase family. The cofactor is a divalent metal cation.

It is found in the cytoplasm. The enzyme catalyses NAD(+) + ATP = ADP + NADP(+) + H(+). Functionally, involved in the regulation of the intracellular balance of NAD and NADP, and is a key enzyme in the biosynthesis of NADP. Catalyzes specifically the phosphorylation on 2'-hydroxyl of the adenosine moiety of NAD to yield NADP. The sequence is that of NAD kinase from Shewanella baltica (strain OS185).